The sequence spans 238 residues: Probable transcriptional regulatory protein STER_0242 (238 aa).

This sequence belongs to the TACO1 family. YeeN subfamily.

It localises to the cytoplasm. The sequence is that of Probable transcriptional regulatory protein STER_0242 from Streptococcus thermophilus (strain ATCC BAA-491 / LMD-9).